An 814-amino-acid polypeptide reads, in one-letter code: Acyl-coenzyme A dehydrogenase (814 aa).

Glutamate 497 (proton acceptor) is an active-site residue.

The protein belongs to the acyl-CoA dehydrogenase family. Requires FAD as cofactor.

The catalysed reaction is a medium-chain 2,3-saturated fatty acyl-CoA + oxidized [electron-transfer flavoprotein] + H(+) = a medium-chain (2E)-enoyl-CoA + reduced [electron-transfer flavoprotein]. It catalyses the reaction a long-chain 2,3-saturated fatty acyl-CoA + oxidized [electron-transfer flavoprotein] + H(+) = a long-chain (2E)-enoyl-CoA + reduced [electron-transfer flavoprotein]. Its pathway is lipid metabolism; fatty acid beta-oxidation. In terms of biological role, catalyzes the dehydrogenation of acyl-coenzymes A (acyl-CoAs) to 2-enoyl-CoAs, the first step of the beta-oxidation cycle of fatty acid degradation. Is required for the utilization of medium- and long-chain fatty acids as sole carbon sources for growth. This chain is Acyl-coenzyme A dehydrogenase (fadE), found in Escherichia coli O157:H7.